The chain runs to 457 residues: Flavin-containing monooxygenase FMO GS-OX2 (457 aa).

17 to 22 (GAGAAG) is a binding site for FAD. 211–216 (GNFASG) is a binding site for NADP(+).

It belongs to the FMO family.

It carries out the reaction a (Z)-omega-(methylsulfanyl)-N-sulfo-alkylhydroximate S-glucoside + NADPH + O2 + H(+) = a (Z)-omega-(methylsulfinyl)-alkyl-glucosinolate + NADP(+) + H2O. Its function is as follows. Catalyzes the conversion of methylthioalkyl glucosinolates of any chain length into methylsulfinylalkyl glucosinolates. The protein is Flavin-containing monooxygenase FMO GS-OX2 (FMOGS-OX2) of Arabidopsis thaliana (Mouse-ear cress).